A 335-amino-acid chain; its full sequence is Large ribosomal subunit protein uL10 (335 aa).

The disordered stretch occupies residues 306–335; the sequence is VEETVEEEEEEEEEEDAEEEAAAGLGALFG. Over residues 308–326 the composition is skewed to acidic residues; that stretch reads ETVEEEEEEEEEEDAEEEA.

Belongs to the universal ribosomal protein uL10 family. As to quaternary structure, part of the 50S ribosomal subunit. Forms part of the ribosomal stalk which helps the ribosome interact with GTP-bound translation factors. Forms a heptameric L10(L12)2(L12)2(L12)2 complex, where L10 forms an elongated spine to which the L12 dimers bind in a sequential fashion.

Its function is as follows. Forms part of the ribosomal stalk, playing a central role in the interaction of the ribosome with GTP-bound translation factors. The sequence is that of Large ribosomal subunit protein uL10 from Methanobrevibacter smithii (strain ATCC 35061 / DSM 861 / OCM 144 / PS).